Consider the following 212-residue polypeptide: MFAEYGVLNYWTYLVGAIFIVLVPGPNTLFVLKNSVSSGMKGGYLAACGVFIGDAVLMFLAWAGMATLIKTTPILFNIVRYLGAFYLLYLGSKILYATLKGKNNEAKSDEPQYGAIFKRALILSLTNPKAILFYVSFFVQFIDVNAPHTGISFFILATTLELVSFCYLSFLIISGAFVTQYIRTKKKLAKVGNSLIGLMFVGFAARLATLQS.

6 consecutive transmembrane segments (helical) span residues 12-32 (TYLVGAIFIVLVPGPNTLFVL), 49-69 (GVFIGDAVLMFLAWAGMATLI), 71-91 (TTPILFNIVRYLGAFYLLYLG), 122-142 (ILSLTNPKAILFYVSFFVQFI), 153-173 (FFILATTLELVSFCYLSFLII), and 188-208 (LAKVGNSLIGLMFVGFAARLA).

It belongs to the Rht family.

It localises to the cell inner membrane. The enzyme catalyses L-leucine(in) + H(+)(out) = L-leucine(out) + H(+)(in). Functionally, exporter of leucine. This is Leucine efflux protein (leuE) from Escherichia coli O157:H7.